Here is a 347-residue protein sequence, read N- to C-terminus: Acetylglutamate kinase, chloroplastic (347 aa).

The N-terminal 50 residues, 1–50, are a transit peptide targeting the chloroplast; sequence MATVTSNASPKSFSFTVSNPFKTLIPNKSPSLCYPTRNKNHHRLGFSIKA. T51 bears the N-acetylthreonine mark. 94-95 provides a ligand contact to ATP; sequence GA. Residues G126, R148, and 242–245 each bind N-acetyl-L-glutamate; that span reads NINA. Residue K260 participates in L-arginine binding. ATP is bound by residues 265-266 and L271; that span reads TD. K282 lines the L-arginine pocket. Residue 297 to 305 coordinates ATP; the sequence is KVAGGMIPK. L-arginine-binding positions include 334 to 337 and G342; that span reads EIMS.

It belongs to the acetylglutamate kinase family. ArgB subfamily. As to quaternary structure, interacts with GLB1. Interaction is dependent of MgATP and inhibited by 2-oxoglutarate, arginine, glutamate, citrate, and oxaloacetate.

It is found in the plastid. The protein resides in the chloroplast stroma. The catalysed reaction is N-acetyl-L-glutamate + ATP = N-acetyl-L-glutamyl 5-phosphate + ADP. Its pathway is amino-acid biosynthesis; L-arginine biosynthesis; N(2)-acetyl-L-ornithine from L-glutamate: step 2/4. Inhibited by arginine. Inhibition is relieved by binding to GLB1. Its function is as follows. Involved in the arginine biosynthetic pathway via the intermediate compound ornithine. The chain is Acetylglutamate kinase, chloroplastic from Arabidopsis thaliana (Mouse-ear cress).